The sequence spans 345 residues: Proto-oncogene serine/threonine-protein kinase mos (345 aa).

The region spanning 63-344 (VCLLQRLGAG…LDLRALQAEL (282 aa)) is the Protein kinase domain. Residues 69–77 (LGAGGFGSV) and lysine 90 contribute to the ATP site. The active-site Proton acceptor is aspartate 202.

The protein belongs to the protein kinase superfamily. Ser/Thr protein kinase family. Interacts with MAP2K1/MEK1. Restricted to gonadal tissues.

It localises to the cytoplasm. The enzyme catalyses L-seryl-[protein] + ATP = O-phospho-L-seryl-[protein] + ADP + H(+). The catalysed reaction is L-threonyl-[protein] + ATP = O-phospho-L-threonyl-[protein] + ADP + H(+). Functionally, serine/threonine kinase involved in the regulation of MAPK signaling. Is an activator of the ERK1/2 signaling cascade playing an essential role in the stimulation of oocyte maturation. This chain is Proto-oncogene serine/threonine-protein kinase mos, found in Sus scrofa (Pig).